A 616-amino-acid chain; its full sequence is Nucleoprotein (616 aa).

Short sequence motifs (nuclear localization signal) lie at residues arginine 230–arginine 233 and lysine 473–lysine 476.

In terms of assembly, homomultimerizes to form the nucleocapsid. Binds to viral genomic RNA. Protein-RNA contacts are mediated by a combination of electrostatic interactions between positively charged residues and the phosphate backbone and planar interactions between aromatic side chains and bases.

It localises to the virion. The protein resides in the host nucleus. It is found in the host nucleolus. Its function is as follows. Encapsidates the negative strand viral RNA, protecting it from nucleases. The encapsidated genomic RNA is termed the ribonucleoprotein (RNP) and serves as template for transcription and replication. The polypeptide is Nucleoprotein (Gadus morhua (Atlantic cod)).